The chain runs to 166 residues: Large ribosomal subunit protein uL10 (166 aa).

The protein belongs to the universal ribosomal protein uL10 family. Part of the ribosomal stalk of the 50S ribosomal subunit. The N-terminus interacts with L11 and the large rRNA to form the base of the stalk. The C-terminus forms an elongated spine to which L12 dimers bind in a sequential fashion forming a multimeric L10(L12)X complex.

Its function is as follows. Forms part of the ribosomal stalk, playing a central role in the interaction of the ribosome with GTP-bound translation factors. The protein is Large ribosomal subunit protein uL10 of Pseudomonas putida (strain GB-1).